The sequence spans 128 residues: uncharacterized protein (128 aa).

This is an uncharacterized protein from Homo sapiens (Human).